The primary structure comprises 382 residues: LIM homeobox transcription factor 1-alpha (382 aa).

LIM zinc-binding domains follow at residues 33-92 (SVCE…LFAV) and 92-154 (VKCG…EREL). 2 disordered regions span residues 161–208 (AASD…QQRR) and 252–286 (KLAR…MEGI). A DNA-binding region (homeobox) is located at residues 195–254 (PKRPRTILTTQQRRAFKASFEVSSKPCRKVRETLAAETGLSVRVVQVWFQNQRAKMKKLA). Low complexity predominate over residues 256 to 269 (RQQQQQQDQQNTQR).

It is found in the nucleus. Functionally, acts as a transcriptional activator by binding to an A/T-rich sequence, the FLAT element, in the insulin gene promoter. Required for development of the roof plate and, in turn, for specification of dorsal cell fates in the CNS and developing vertebrae. The protein is LIM homeobox transcription factor 1-alpha (Lmx1a) of Mus musculus (Mouse).